The following is a 474-amino-acid chain: Adenosylhomocysteinase (474 aa).

Substrate contacts are provided by Thr61, Asp136, and Glu196. An NAD(+)-binding site is contributed by 197–199 (TTT). The substrate site is built by Lys226 and Asp230. NAD(+)-binding positions include Asn231, 260 to 265 (GYGDVG), Glu283, Asn318, 339 to 341 (IGH), and Asn384.

Belongs to the adenosylhomocysteinase family. Requires NAD(+) as cofactor.

Its subcellular location is the cytoplasm. It catalyses the reaction S-adenosyl-L-homocysteine + H2O = L-homocysteine + adenosine. The protein operates within amino-acid biosynthesis; L-homocysteine biosynthesis; L-homocysteine from S-adenosyl-L-homocysteine: step 1/1. May play a key role in the regulation of the intracellular concentration of adenosylhomocysteine. This is Adenosylhomocysteinase from Ralstonia pickettii (strain 12J).